Reading from the N-terminus, the 442-residue chain is Mitochondrial inner membrane magnesium transporter MRS2 (442 aa).

The transit peptide at M1–H15 directs the protein to the mitochondrion. Residues L308 to V328 form a helical membrane-spanning segment. The YGMN signature appears at Y332–N335. The chain crosses the membrane as a helical span at residues N344–T364.

Belongs to the CorA metal ion transporter (MIT) (TC 1.A.35) family. In terms of assembly, homopentamer. Forms homooligomers. Interacts with MFM1.

The protein resides in the mitochondrion inner membrane. In terms of biological role, high-conductance magnesium-selective channel that mediates the influx of magnesium into the mitochondrial matrix. Essential for the splicing of mRNA group II introns in mitochondria by affecting mitochondrial magnesium concentrations, which are critical for group II intron splicing. It also suppresses a variety of mitochondrial intron mutations and its absence may disturb the assembly of mitochondrial membrane complexes. This Kluyveromyces lactis (strain ATCC 8585 / CBS 2359 / DSM 70799 / NBRC 1267 / NRRL Y-1140 / WM37) (Yeast) protein is Mitochondrial inner membrane magnesium transporter MRS2 (MRS2).